Here is a 219-residue protein sequence, read N- to C-terminus: Endonuclease III (219 aa).

Residues 117 to 136 (MEELLTLPGVARKTANVVLA) enclose the HhH domain. 4 residues coordinate [4Fe-4S] cluster: C197, C204, C207, and C213.

It belongs to the Nth/MutY family. [4Fe-4S] cluster is required as a cofactor.

The catalysed reaction is 2'-deoxyribonucleotide-(2'-deoxyribose 5'-phosphate)-2'-deoxyribonucleotide-DNA = a 3'-end 2'-deoxyribonucleotide-(2,3-dehydro-2,3-deoxyribose 5'-phosphate)-DNA + a 5'-end 5'-phospho-2'-deoxyribonucleoside-DNA + H(+). DNA repair enzyme that has both DNA N-glycosylase activity and AP-lyase activity. The DNA N-glycosylase activity releases various damaged pyrimidines from DNA by cleaving the N-glycosidic bond, leaving an AP (apurinic/apyrimidinic) site. The AP-lyase activity cleaves the phosphodiester bond 3' to the AP site by a beta-elimination, leaving a 3'-terminal unsaturated sugar and a product with a terminal 5'-phosphate. The sequence is that of Endonuclease III from Synechocystis sp. (strain ATCC 27184 / PCC 6803 / Kazusa).